A 726-amino-acid polypeptide reads, in one-letter code: MNSLQSLCVLCARLNECALDLECLKFCDPVIVLSDMANFKKNGIVILHLYQTFFEGIKEQNLLCASALTVYMQVLLKAMYEQVLLLDAALESFMVDQDRKKYFEKVLCLRRCAEHLSINISLNNGVEFIVQLSTLNDIEQLISKINSVYALLLPQEGLQICGKIIDLLTIMCGACMVAKPESYLETKTCMKCYEELTLTPNQGKSLRRRLHGKFCNHLTEQKAFFNIEKNIETIEKDLGEAILNYGTVQSVATEIKKIFKQQRSAESLHVSDAEKTLKKYNIFSKVPDVIYSLSEFTYWSKISETIVRNVAITLQQLNSCHTLYKQLQNDVSLYLYGEVSEDFLALSENLLTHDERLYVGSIYVSPSRLIDLVTGLSIKNLEESPIFKRLAEEDEVQHKIKSLLHDIRDPQTTETPGRLNTINCMLQTHNLQQEVLARKKAYFQKVSESGYNRVMACIREQESLINKVVSVNVYGNFIFEALSKIMNGFVLRKMYLDGSFRVDSCTYDEHLYIKNNLMPKKLPLELLPDLSEIMYTLLTGPLSDFHKSAYPLPANISMAYGCDHAEMLPHMKEDLARCIEGTIHPSVWMVCEYNEFFNFSGVTDVNDMQKKMWNFIRELTLSVALYNDVFGKRLKIVRIDEEGDLSGNVVLTFNHESPLLFHTGGGMTKFKDVYSLLYCDLQAQLSRETVDVPEGVSYSVRTPNLLDLVRENEQDGSIIPGCLFDE.

The C3H1-type zinc finger occupies 189–217 (CMKCYEELTLTPNQGKSLRRRLHGKFCNH). 626 to 633 (YNDVFGKR) contributes to the ATP binding site.

It belongs to the herpesviridae TRM1 protein family. As to quaternary structure, associates with TRM2 and TRM3 to form the tripartite terminase complex. Interacts with portal protein.

It localises to the host nucleus. Its function is as follows. Component of the molecular motor that translocates viral genomic DNA in empty capsid during DNA packaging. Forms a tripartite terminase complex together with TRM2 and TRM3 in the host cytoplasm. Once the complex reaches the host nucleus, it interacts with the capsid portal vertex. This portal forms a ring in which genomic DNA is translocated into the capsid. TRM1 carries an endonuclease activity that plays an important role for the cleavage of concatemeric viral DNA into unit length genomes. The chain is Tripartite terminase subunit 1 from Homo sapiens (Human).